A 39-amino-acid polypeptide reads, in one-letter code: Photosystem II reaction center protein J (39 aa).

Residues 9 to 29 (LWLVGLVGGLAVITMLGLFIY) traverse the membrane as a helical segment.

The protein belongs to the PsbJ family. PSII is composed of 1 copy each of membrane proteins PsbA, PsbB, PsbC, PsbD, PsbE, PsbF, PsbH, PsbI, PsbJ, PsbK, PsbL, PsbM, PsbT, PsbX, PsbY, PsbZ, Psb30/Ycf12, at least 3 peripheral proteins of the oxygen-evolving complex and a large number of cofactors. It forms dimeric complexes.

The protein resides in the plastid. The protein localises to the chloroplast thylakoid membrane. In terms of biological role, one of the components of the core complex of photosystem II (PSII). PSII is a light-driven water:plastoquinone oxidoreductase that uses light energy to abstract electrons from H(2)O, generating O(2) and a proton gradient subsequently used for ATP formation. It consists of a core antenna complex that captures photons, and an electron transfer chain that converts photonic excitation into a charge separation. The chain is Photosystem II reaction center protein J from Phaeodactylum tricornutum (strain CCAP 1055/1).